Consider the following 342-residue polypeptide: MTQGKHCVPQGSTILVTGANGYLASAITKLLLELGYKVRGTVRAPKPWLNHYFEERYGSGNFETVIITDFQDTDTWDQALEGISGIAHVAHDMAWSSDPNIAVRGPVKAILNILDIASKHDSVKRIVLTSTIGAAPCIDINGNPATTPVNDDDWNDFAVEAAWSDSTPEEQRVYINHCAAKVEGDRKALQWVQDNQPGFDVNIVMPGFSVGRILHASITGQSMREIVGLLQGKPTKMFEFVPPWFINTEDVARLHVIALLKPEVSSQRIFACASPFTWKEVVSILRELDPSNTLIPDAPDENRRPCHVIPATEAERLIQDFFGRNGFTSLRDSLASAVTKSA.

The protein belongs to the NAD(P)-dependent epimerase/dehydratase family. Dihydroflavonol-4-reductase subfamily.

The protein operates within secondary metabolite biosynthesis; terpenoid biosynthesis. Functionally, ketoreductase; part of the gene cluster that mediates the biosynthesis of novofumigatonin, a heavily oxygenated meroterpenoid containing a unique orthoester moiety. The first step of the pathway is the synthesis of 3,5-dimethylorsellinic acid (DMOA) by the polyketide synthase nvfA via condensation of one acetyl-CoA starter unit with 3 malonyl-CoA units and 2 methylations. DMOA is then converted to farnesyl-DMOA by the farnesyltransferase nvfB. Epoxydation by FAD-dependent monooxygenase nvfK, followed by a protonation-initiated cyclization catalyzed by the terpene cyclase nvfL leads to the production of asnavolin H. The short chain dehydrogenase nvfC then as a 3-OH dehydrogenase of asnovolin H to yield chemesin D. There are two branches to synthesize asnovolin A from chemesin D. In one branch, chemesin D undergoes Baeyer-Villiger oxidation by nvfH, methylation by nvfJ, and enoyl reduction by the nvfM D enoylreductase that reduces the double bond between C-5'and C-6', to form respectively asnovolin I, asnovolin K, and asnovolin A. In the other branch, the methylation precedes the Baeyer-Villiger oxidation and the enoyl reduction to yield asnovolin A via the asnovolin J intermediate. Asnovolin A is further converted to fumigatonoid A by the Fe(II)/2-oxoglutarate-dependent dioxygenase nvfI that catalyzes an endoperoxidation reaction. The alpha/beta hydrolase nvfD then acts as an epimerase that converts fumigatonoid A to its C-5' epimer, which then undergoes spontaneous or nvfD-catalyzed lactonization. The following step utilizes the ketoreductase nvfG to produce fumigatonoid B. The dioxygenase nvfE further converts fumigatonoid B into fumigatonoid C. Finally the Fe(II)/2-oxoglutarate-dependent dioxygenase nvfF catalyzes two rounds of oxidation to transform fumigatonoid C into the end product, novofumigatonin A. The polypeptide is Ketoreductase nvfG (Aspergillus novofumigatus (strain IBT 16806)).